Consider the following 103-residue polypeptide: Small ribosomal subunit protein uS10 (103 aa).

Belongs to the universal ribosomal protein uS10 family. As to quaternary structure, part of the 30S ribosomal subunit.

Its function is as follows. Involved in the binding of tRNA to the ribosomes. The protein is Small ribosomal subunit protein uS10 of Borrelia duttonii (strain Ly).